A 322-amino-acid chain; its full sequence is MAASRSLVPDRLRLPLCFLGVFVCYFYYGILQEKITRGKYGEGPKQETFTFALTLVFIQCVINAMFAKILIQFFDTARVDRTRTWLYAACSVSYVGAMVSSNSALQFVNYPTQVLGKSCKPIPVMLLGVTLLKKKYPLAKYLCVLLIVAGVALFMYKPKKVVGIEEHTVGFGELLLLMSLTLDGLTGVSQDHMRAHYQTGSNHMMLNINLWSTFLLGAGILFTGELWEFLSFAERYPTIIYNILLFGLTSALGQSFIFMTVVYFGPLTCSIITTTRKFFTILASVILFANPISSMQWVGTVLVFLGLGLDAKFGKGTKKTSH.

A run of 8 helical transmembrane segments spans residues 12 to 32, 51 to 71, 85 to 105, 136 to 156, 168 to 188, 210 to 230, 243 to 263, and 285 to 305; these read LRLP…GILQ, FALT…KILI, WLYA…NSAL, YPLA…LFMY, TVGF…LTGV, LWST…WEFL, ILLF…TVVY, and VILF…LVFL. The short motif at 318-322 is the Di-lysine motif element; the sequence is KKTSH.

The protein belongs to the nucleotide-sugar transporter family. SLC35B subfamily.

It is found in the endoplasmic reticulum membrane. The enzyme catalyses ADP(in) + ATP(out) = ADP(out) + ATP(in). It catalyses the reaction UDP(out) + ATP(in) = UDP(in) + ATP(out). The catalysed reaction is UTP(out) + ATP(in) = UTP(in) + ATP(out). It carries out the reaction dATP(out) + ATP(in) = dATP(in) + ATP(out). In terms of biological role, ATP:ADP antiporter that catalyzes the exchange of ATP and ADP across the endoplasmic reticulum (ER) membrane. Imports ATP from the cytosol to the ER lumen and exports ADP in the opposite direction. Regulates ER energy metabolism and protein biogenesis. Appears to be part of a calcium-dependent ER to cytosol low energy response axis, where calcium efflux from ER to the cytosol triggers ATP import into the ER lumen to maintain sufficient ATP supply. Provides ATP to ER chaperone HSPA5 that drives protein folding and trafficking in the ER. Can transport dATP, UTP or UDP in exchange for ATP, but the physiological relevance of this process remains to be established. The protein is Solute carrier family 35 member B1 (Slc35b1) of Mus musculus (Mouse).